The primary structure comprises 218 residues: Thiopurine S-methyltransferase (218 aa).

S-adenosyl-L-methionine is bound by residues tryptophan 11, leucine 46, glutamate 67, and arginine 122.

The protein belongs to the class I-like SAM-binding methyltransferase superfamily. TPMT family.

The protein resides in the cytoplasm. The catalysed reaction is S-adenosyl-L-methionine + a thiopurine = S-adenosyl-L-homocysteine + a thiopurine S-methylether.. The sequence is that of Thiopurine S-methyltransferase from Vibrio cholerae serotype O1 (strain ATCC 39541 / Classical Ogawa 395 / O395).